Consider the following 382-residue polypeptide: Alkaline serine protease ver112 (382 aa).

Positions 1–15 (MRLSIIAAVLPLALA) are cleaved as a signal peptide. Positions 16-102 (APVAEPEIAP…IEQDAIFSIN (87 aa)) are excised as a propeptide. The Inhibitor I9 domain occupies 56 to 99 (SKIPGIERVYENVLNGFSATLSNEELERLRRDPDVESIEQDAIF). A Peptidase S8 domain is found at 111–382 (TWGLTRISHR…VNYLAFNGAT (272 aa)). 2 disulfide bridges follow: cysteine 138–cysteine 227 and cysteine 282–cysteine 353. Catalysis depends on charge relay system residues aspartate 143, histidine 173, and serine 328.

Belongs to the peptidase S8 family.

The protein resides in the secreted. Its activity is regulated as follows. Inhibited by phenylmethylsulfonyl fluoride (PMSF). Serine protease which can degrade the nematode cuticle. The sequence is that of Alkaline serine protease ver112 from Corniculantispora psalliotae (Lecanicillium psalliotae).